A 160-amino-acid polypeptide reads, in one-letter code: MTRKQRRATFIAVSLGILALAVGLVLYAMRDSIVYFYSPSDVVERGVEPGQRIRLGGLVEEGSLEQLGDAYIRFNVTDFAETIPVTYRGVLPDLFREGQGVVTEGALDGTGAFIADNVLAKHDEYYMPPEVADALKRTGNWQGEGAEAPHSETYGQGSYP.

The Cytoplasmic portion of the chain corresponds to 1 to 7 (MTRKQRR). A helical; Signal-anchor for type II membrane protein membrane pass occupies residues 8–28 (ATFIAVSLGILALAVGLVLYA). At 29 to 160 (MRDSIVYFYS…SETYGQGSYP (132 aa)) the chain is on the periplasmic side. Heme contacts are provided by H122 and Y126. Residues 141–160 (WQGEGAEAPHSETYGQGSYP) form a disordered region.

Belongs to the CcmE/CycJ family.

It localises to the cell inner membrane. Its function is as follows. Heme chaperone required for the biogenesis of c-type cytochromes. Transiently binds heme delivered by CcmC and transfers the heme to apo-cytochromes in a process facilitated by CcmF and CcmH. This is Cytochrome c-type biogenesis protein CcmE from Parvibaculum lavamentivorans (strain DS-1 / DSM 13023 / NCIMB 13966).